Reading from the N-terminus, the 144-residue chain is Large ribosomal subunit protein uL16 (144 aa).

This sequence belongs to the universal ribosomal protein uL16 family. In terms of assembly, part of the 50S ribosomal subunit.

Functionally, binds 23S rRNA and is also seen to make contacts with the A and possibly P site tRNAs. This Ligilactobacillus salivarius (strain UCC118) (Lactobacillus salivarius) protein is Large ribosomal subunit protein uL16.